The sequence spans 258 residues: UPF0246 protein YaaA (258 aa).

Belongs to the UPF0246 family.

In Escherichia coli O8 (strain IAI1), this protein is UPF0246 protein YaaA.